We begin with the raw amino-acid sequence, 217 residues long: Uracil-DNA glycosylase (217 aa).

Asp62 serves as the catalytic Proton acceptor.

It belongs to the uracil-DNA glycosylase (UDG) superfamily. UNG family.

The protein localises to the cytoplasm. It catalyses the reaction Hydrolyzes single-stranded DNA or mismatched double-stranded DNA and polynucleotides, releasing free uracil.. Excises uracil residues from the DNA which can arise as a result of misincorporation of dUMP residues by DNA polymerase or due to deamination of cytosine. The protein is Uracil-DNA glycosylase of Streptococcus thermophilus (strain ATCC BAA-491 / LMD-9).